Here is a 303-residue protein sequence, read N- to C-terminus: Aspartate carbamoyltransferase catalytic subunit (303 aa).

Residues R51 and T52 each contribute to the carbamoyl phosphate site. An L-aspartate-binding site is contributed by K80. Carbamoyl phosphate-binding residues include R101, H129, and Q132. Residues R162 and R221 each contribute to the L-aspartate site. Residues L260 and P261 each contribute to the carbamoyl phosphate site.

It belongs to the aspartate/ornithine carbamoyltransferase superfamily. ATCase family. In terms of assembly, heterooligomer of catalytic and regulatory chains.

It catalyses the reaction carbamoyl phosphate + L-aspartate = N-carbamoyl-L-aspartate + phosphate + H(+). It participates in pyrimidine metabolism; UMP biosynthesis via de novo pathway; (S)-dihydroorotate from bicarbonate: step 2/3. Functionally, catalyzes the condensation of carbamoyl phosphate and aspartate to form carbamoyl aspartate and inorganic phosphate, the committed step in the de novo pyrimidine nucleotide biosynthesis pathway. This chain is Aspartate carbamoyltransferase catalytic subunit, found in Saccharolobus islandicus (strain M.16.4 / Kamchatka #3) (Sulfolobus islandicus).